A 425-amino-acid chain; its full sequence is Ribulose bisphosphate carboxylase/oxygenase activase B, chloroplastic (425 aa).

Residues 1–43 constitute a chloroplast transit peptide; sequence MASAFSSTVGAPASTPTIFLGKKVKNYYHGGNKMKSRVVRVMA. 153 to 160 lines the ATP pocket; sequence GGKGQGKS.

It belongs to the RuBisCO activase family.

The protein localises to the plastid. It localises to the chloroplast stroma. Its function is as follows. Activation of RuBisCO (ribulose-1,5-bisphosphate carboxylase/oxygenase; EC 4.1.1.39) involves the ATP-dependent carboxylation of the epsilon-amino group of lysine leading to a carbamate structure. In Hordeum vulgare (Barley), this protein is Ribulose bisphosphate carboxylase/oxygenase activase B, chloroplastic (RCAB).